The primary structure comprises 451 residues: Bifunctional protein GlmU (451 aa).

Residues 1 to 229 form a pyrophosphorylase region; that stretch reads MQRHAIILAA…FDEIIGVNDR (229 aa). Residues 8–11, Lys22, Gln72, and 77–78 each bind UDP-N-acetyl-alpha-D-glucosamine; these read LAAG and GT. Residue Asp102 coordinates Mg(2+). The UDP-N-acetyl-alpha-D-glucosamine site is built by Gly139, Glu154, and Asn227. Asn227 lines the Mg(2+) pocket. The linker stretch occupies residues 230–250; that stretch reads LMLSEAEKALQQRINRYHMEN. Positions 251–451 are N-acetyltransferase; it reads GVTIIDPSST…QVNKEGYLKK (201 aa). Residues Arg332 and Lys350 each contribute to the UDP-N-acetyl-alpha-D-glucosamine site. His362 serves as the catalytic Proton acceptor. 2 residues coordinate UDP-N-acetyl-alpha-D-glucosamine: Tyr365 and Asn376. Acetyl-CoA-binding positions include 385–386, Ala422, and Arg439; that span reads NY.

In the N-terminal section; belongs to the N-acetylglucosamine-1-phosphate uridyltransferase family. It in the C-terminal section; belongs to the transferase hexapeptide repeat family. Homotrimer. It depends on Mg(2+) as a cofactor.

It localises to the cytoplasm. The catalysed reaction is alpha-D-glucosamine 1-phosphate + acetyl-CoA = N-acetyl-alpha-D-glucosamine 1-phosphate + CoA + H(+). The enzyme catalyses N-acetyl-alpha-D-glucosamine 1-phosphate + UTP + H(+) = UDP-N-acetyl-alpha-D-glucosamine + diphosphate. It functions in the pathway nucleotide-sugar biosynthesis; UDP-N-acetyl-alpha-D-glucosamine biosynthesis; N-acetyl-alpha-D-glucosamine 1-phosphate from alpha-D-glucosamine 6-phosphate (route II): step 2/2. It participates in nucleotide-sugar biosynthesis; UDP-N-acetyl-alpha-D-glucosamine biosynthesis; UDP-N-acetyl-alpha-D-glucosamine from N-acetyl-alpha-D-glucosamine 1-phosphate: step 1/1. The protein operates within bacterial outer membrane biogenesis; LPS lipid A biosynthesis. In terms of biological role, catalyzes the last two sequential reactions in the de novo biosynthetic pathway for UDP-N-acetylglucosamine (UDP-GlcNAc). The C-terminal domain catalyzes the transfer of acetyl group from acetyl coenzyme A to glucosamine-1-phosphate (GlcN-1-P) to produce N-acetylglucosamine-1-phosphate (GlcNAc-1-P), which is converted into UDP-GlcNAc by the transfer of uridine 5-monophosphate (from uridine 5-triphosphate), a reaction catalyzed by the N-terminal domain. This is Bifunctional protein GlmU from Staphylococcus epidermidis (strain ATCC 35984 / DSM 28319 / BCRC 17069 / CCUG 31568 / BM 3577 / RP62A).